The chain runs to 72 residues: DNA-directed RNA polymerase subunit Rpo10 (72 aa).

Zn(2+) contacts are provided by Cys7, Cys10, Cys53, and Cys54.

The protein belongs to the archaeal Rpo10/eukaryotic RPB10 RNA polymerase subunit family. In terms of assembly, part of the RNA polymerase complex. Requires Zn(2+) as cofactor.

It localises to the cytoplasm. The catalysed reaction is RNA(n) + a ribonucleoside 5'-triphosphate = RNA(n+1) + diphosphate. Its function is as follows. DNA-dependent RNA polymerase (RNAP) catalyzes the transcription of DNA into RNA using the four ribonucleoside triphosphates as substrates. The polypeptide is DNA-directed RNA polymerase subunit Rpo10 (Thermoplasma volcanium (strain ATCC 51530 / DSM 4299 / JCM 9571 / NBRC 15438 / GSS1)).